The chain runs to 424 residues: UPF0229 protein PC1_1960 (424 aa).

The disordered stretch occupies residues Ile46–Glu109. The segment covering Pro77 to Arg90 has biased composition (basic and acidic residues). The span at Gln92–Gln101 shows a compositional bias: gly residues.

It belongs to the UPF0229 family.

This Pectobacterium carotovorum subsp. carotovorum (strain PC1) protein is UPF0229 protein PC1_1960.